A 513-amino-acid polypeptide reads, in one-letter code: Sterol 14-alpha demethylase rstn2 (513 aa).

Residues 3-23 (WPLIGAYALLAFVAIIALNVT) form a helical membrane-spanning segment. Cysteine 453 lines the heme pocket.

This sequence belongs to the cytochrome P450 family. The cofactor is heme.

The protein localises to the membrane. It carries out the reaction a 14alpha-methyl steroid + 3 reduced [NADPH--hemoprotein reductase] + 3 O2 = a Delta(14) steroid + formate + 3 oxidized [NADPH--hemoprotein reductase] + 4 H2O + 4 H(+). The enzyme catalyses a 14alpha-methyl steroid + reduced [NADPH--hemoprotein reductase] + O2 = a 14alpha-hydroxymethyl steroid + oxidized [NADPH--hemoprotein reductase] + H2O + H(+). The catalysed reaction is a 14alpha-hydroxymethyl steroid + reduced [NADPH--hemoprotein reductase] + O2 = a 14alpha-formyl steroid + oxidized [NADPH--hemoprotein reductase] + 2 H2O + H(+). It catalyses the reaction a 14alpha-formyl steroid + reduced [NADPH--hemoprotein reductase] + O2 = a Delta(14) steroid + formate + oxidized [NADPH--hemoprotein reductase] + H2O + 2 H(+). It carries out the reaction lanosterol + 3 reduced [NADPH--hemoprotein reductase] + 3 O2 = 4,4-dimethyl-5alpha-cholesta-8,14,24-trien-3beta-ol + formate + 3 oxidized [NADPH--hemoprotein reductase] + 4 H2O + 4 H(+). The enzyme catalyses lanosterol + reduced [NADPH--hemoprotein reductase] + O2 = 32-hydroxylanosterol + oxidized [NADPH--hemoprotein reductase] + H2O + H(+). The catalysed reaction is 32-hydroxylanosterol + reduced [NADPH--hemoprotein reductase] + O2 = 32-oxolanosterol + oxidized [NADPH--hemoprotein reductase] + 2 H2O + H(+). It catalyses the reaction 32-oxolanosterol + reduced [NADPH--hemoprotein reductase] + O2 = 4,4-dimethyl-5alpha-cholesta-8,14,24-trien-3beta-ol + formate + oxidized [NADPH--hemoprotein reductase] + H2O + 2 H(+). It carries out the reaction eburicol + 3 reduced [NADPH--hemoprotein reductase] + 3 O2 = 14-demethyleburicol + formate + 3 oxidized [NADPH--hemoprotein reductase] + 4 H2O + 4 H(+). The enzyme catalyses eburicol + reduced [NADPH--hemoprotein reductase] + O2 = 32-hydroxyeburicol + oxidized [NADPH--hemoprotein reductase] + H2O + H(+). The catalysed reaction is 32-hydroxyeburicol + reduced [NADPH--hemoprotein reductase] + O2 = 32-oxoeburicol + oxidized [NADPH--hemoprotein reductase] + 2 H2O + H(+). It catalyses the reaction 32-oxoeburicol + reduced [NADPH--hemoprotein reductase] + O2 = 14-demethyleburicol + formate + oxidized [NADPH--hemoprotein reductase] + H2O + 2 H(+). It functions in the pathway steroid biosynthesis; sterol biosynthesis. Functionally, sterol 14-alpha demethylase; part of the gene cluster that mediates the biosynthesis of the tetrahydropyranyl antifungal agent restricticin that acts as an inhibitor of CYP51 and blocks the ergosterol biosynthesis. Sterol 14-alpha-demethylase plays a critical role in the biosynthesis of ergosterol, the major sterol component in fungal membranes that participates in a variety of functions. Rtsn2 acts as a self-resistant CYP51 that contains mutations found in CYP51s isolated from azole resistance strains and that is not inhibited by the final product of the cluster, restricticin. This is Sterol 14-alpha demethylase rstn2 from Aspergillus nomiae NRRL (strain ATCC 15546 / NRRL 13137 / CBS 260.88 / M93).